A 217-amino-acid chain; its full sequence is MPFARVGALSARHYSNQVDPKVKATSILDSIPGNNVLSKTGVLATGVLGSIYAISNELYIVNDESIVLGVFAAFVVVVAKLGGPGYTSWADGYIENMRNILNTTRDKHTDAVKERIGDVSKLKDVVKTTQDLFAVSKDTVKLEAEVFETKQQVVLAAEAKSVLDSWVRYENSVRQREQKLLTETVISKIEKDLKDPKFQQKILQQSVEDIEKLFAKA.

The transit peptide at 1–14 (MPFARVGALSARHY) directs the protein to the mitochondrion. 2 helical membrane-spanning segments follow: residues 41–61 (GVLA…LYIV) and 66–86 (IVLG…GPGY).

F-type ATP synthases have 2 components, the catalytic core F(1) and the membrane-embedded component F(0), linked together by a central stalk and a peripheral stalk. The central stalk, also called rotor shaft, is often seen as part of F(1). The peripheral stalk is seen as part of F(0). F(0) contains the membrane channel next to the rotor. F-type ATP synthases form dimers but each monomer functions independently in ATP generation. The dimer consists of 17 different polypeptides: ATP1 (subunit alpha, 3 molecules per monomer, part of F(1)), ATP2 (subunit beta, 3 copies per monomer, part of F(1)), ATP3 (subunit gamma, part of the central stalk), ATP4 (subunit b, part of the peripheral stalk), ATP5/OSCP (subunit 5/OSCP, part of the peripheral stalk), ATP6 (subunit a, part of the peripheral stalk), ATP7 (subunit d, part of the peripheral stalk), ATP8 (subunit 8, part of the peripheral stalk), OLI1 (subunit c, part of the rotor, 10 molecules per monomer), ATP14 (subunit h, part of the peripheral stalk), ATP15 (subunit epsilon, part of the central stalk), ATP16 (subunit delta, part of the central stalk), ATP17 (subunit f, part of the peripheral stalk), ATP18 (subunit i/j, part of the peripheral stalk), ATP19 (subunit k, dimer-specific, at interface between monomers), ATP20 (subunit g, at interface between monomers), TIM11 (subunit e, at interface between monomers).

It is found in the mitochondrion inner membrane. Mitochondrial membrane ATP synthase (F(1)F(0) ATP synthase or Complex V) produces ATP from ADP in the presence of a proton gradient across the membrane which is generated by electron transport complexes of the respiratory chain. F-type ATP synthases consist of two structural domains, F(1) - containing the extramembraneous catalytic core, and F(0) - containing the membrane proton channel, linked together by a central stalk and a peripheral stalk. During catalysis, ATP synthesis in the catalytic domain of F(1) is coupled via a rotary mechanism of the central stalk subunits to proton translocation. Part of the complex F(0) domain and the peripheral stalk, which acts as a stator to hold the catalytic alpha/ATP1(3)beta/ATP2(3) subcomplex and subunit a/ATP6 static relative to the rotary elements. The chain is ATP synthase subunit 4, mitochondrial from Yarrowia lipolytica (strain CLIB 122 / E 150) (Yeast).